The sequence spans 61 residues: Large ribosomal subunit protein uL30 (61 aa).

This sequence belongs to the universal ribosomal protein uL30 family. Part of the 50S ribosomal subunit.

The chain is Large ribosomal subunit protein uL30 from Neisseria meningitidis serogroup C (strain 053442).